Here is a 340-residue protein sequence, read N- to C-terminus: Dihydroorotate dehydrogenase (quinone) (340 aa).

FMN-binding positions include 65–69 and Thr-89; that span reads AGADK. Residue Lys-69 coordinates substrate. 114 to 118 is a binding site for substrate; sequence NRNGF. 2 residues coordinate FMN: Asn-142 and Asn-175. Substrate is bound at residue Asn-175. Ser-178 serves as the catalytic Nucleophile. Asn-180 is a substrate binding site. Residues Lys-220 and Thr-248 each contribute to the FMN site. Substrate is bound at residue 249–250; sequence NT. Residues Gly-271, Gly-300, and 321–322 each bind FMN; that span reads YS.

Belongs to the dihydroorotate dehydrogenase family. Type 2 subfamily. Monomer. FMN is required as a cofactor.

It localises to the cell membrane. It carries out the reaction (S)-dihydroorotate + a quinone = orotate + a quinol. It participates in pyrimidine metabolism; UMP biosynthesis via de novo pathway; orotate from (S)-dihydroorotate (quinone route): step 1/1. Its function is as follows. Catalyzes the conversion of dihydroorotate to orotate with quinone as electron acceptor. The chain is Dihydroorotate dehydrogenase (quinone) from Actinobacillus succinogenes (strain ATCC 55618 / DSM 22257 / CCUG 43843 / 130Z).